The chain runs to 249 residues: Acetylglutamate kinase (249 aa).

Substrate is bound by residues 36–37 (GG), Arg58, and Asn147.

Belongs to the acetylglutamate kinase family. ArgB subfamily.

Its subcellular location is the cytoplasm. It carries out the reaction N-acetyl-L-glutamate + ATP = N-acetyl-L-glutamyl 5-phosphate + ADP. It participates in amino-acid biosynthesis; L-arginine biosynthesis; N(2)-acetyl-L-ornithine from L-glutamate: step 2/4. In terms of biological role, catalyzes the ATP-dependent phosphorylation of N-acetyl-L-glutamate. The protein is Acetylglutamate kinase of Thermus thermophilus (strain ATCC 27634 / DSM 579 / HB8).